Reading from the N-terminus, the 1431-residue chain is Zinc finger protein 687b (1431 aa).

2 disordered regions span residues K24–K481 and K504–G538. Low complexity predominate over residues S61 to S73. Polar residues predominate over residues G103–G122. Low complexity-rich tracts occupy residues M174–L188, A196–P209, and L217–P248. A compositionally biased stretch (polar residues) spans L249–A267. Residues S311–P324 are compositionally biased toward low complexity. Residues R342 to S359 are compositionally biased toward polar residues. Residues P361 to P377 show a composition bias toward basic and acidic residues. Residues P385–A410 show a composition bias toward low complexity. The segment covering D438–V449 has biased composition (basic and acidic residues). The span at Q519–K528 shows a compositional bias: gly residues. Residues Y674–H692 form a C2H2-type 1; degenerate zinc finger. Residues T754 to P816 form a disordered region. Positions L760 to P775 are enriched in low complexity. The span at A781–S802 shows a compositional bias: polar residues. The C2H2-type 2; degenerate zinc-finger motif lies at F830–R853. C2H2-type zinc fingers lie at residues Y919–H942, H947–H970, Y982–H1004, and F1013–H1036. The interval V1041–M1120 is disordered. Over residues A1043–A1057 the composition is skewed to low complexity. The span at G1058–L1075 shows a compositional bias: polar residues. The span at G1080 to Q1111 shows a compositional bias: acidic residues. The segment at W1122–H1145 adopts a C2H2-type 7 zinc-finger fold. A C2H2-type 8; degenerate zinc finger spans residues W1205–R1227. Positions R1225–T1310 are disordered. 2 C2H2-type zinc fingers span residues F1307–H1329 and Q1337–H1360. The tract at residues L1362 to D1392 is disordered. A compositionally biased stretch (polar residues) spans P1373–S1384. The segment at V1395 to H1425 adopts a C2H2-type 11 zinc-finger fold.

The protein belongs to the krueppel C2H2-type zinc-finger protein family. Widely expressed with highest levels in eye, spleen and ovary.

Its subcellular location is the nucleus. May be involved in transcriptional regulation. This chain is Zinc finger protein 687b (znf687b), found in Danio rerio (Zebrafish).